A 95-amino-acid polypeptide reads, in one-letter code: YcgL domain-containing protein Patl_2802 (95 aa).

Residues 4–88 (LLCAVYKSSK…PEENLLKQHL (85 aa)) enclose the YcgL domain.

This Pseudoalteromonas atlantica (strain T6c / ATCC BAA-1087) protein is YcgL domain-containing protein Patl_2802.